A 1134-amino-acid chain; its full sequence is Translation initiation factor IF-2 (1134 aa).

Disordered stretches follow at residues Ala55–Gly465 and Leu491–Arg524. 5 stretches are compositionally biased toward polar residues: residues Gln56–Pro65, Ser83–Lys105, Pro137–Val147, Gln208–Asn234, and Val251–Leu264. 2 stretches are compositionally biased toward basic and acidic residues: residues Lys391–Gly403 and Pro438–Arg450. Basic residues-rich tracts occupy residues Gly495 to Gly504 and Leu511 to Arg524. Positions Arg626–Leu798 constitute a tr-type G domain. The interval Gly635–Thr642 is G1. Gly635 to Thr642 is a GTP binding site. Residues Gly660 to His664 form a G2 region. Residues Asp685–Gly688 are G3. Residues Asp685 to His689 and Asn739 to Asp742 contribute to the GTP site. Residues Asn739–Asp742 are G4. The interval Ser775–Ile777 is G5.

The protein belongs to the TRAFAC class translation factor GTPase superfamily. Classic translation factor GTPase family. IF-2 subfamily.

Its subcellular location is the cytoplasm. Functionally, one of the essential components for the initiation of protein synthesis. Protects formylmethionyl-tRNA from spontaneous hydrolysis and promotes its binding to the 30S ribosomal subunits. Also involved in the hydrolysis of GTP during the formation of the 70S ribosomal complex. This is Translation initiation factor IF-2 from Prochlorococcus marinus (strain SARG / CCMP1375 / SS120).